Consider the following 309-residue polypeptide: Probable manganese-dependent inorganic pyrophosphatase (309 aa).

Histidine 9, aspartate 13, aspartate 15, aspartate 75, histidine 97, and aspartate 149 together coordinate Mn(2+).

Belongs to the PPase class C family. It depends on Mn(2+) as a cofactor.

It localises to the cytoplasm. The catalysed reaction is diphosphate + H2O = 2 phosphate + H(+). This Bacillus cereus (strain G9842) protein is Probable manganese-dependent inorganic pyrophosphatase.